Consider the following 178-residue polypeptide: ATP synthase subunit delta (178 aa).

Belongs to the ATPase delta chain family. F-type ATPases have 2 components, F(1) - the catalytic core - and F(0) - the membrane proton channel. F(1) has five subunits: alpha(3), beta(3), gamma(1), delta(1), epsilon(1). F(0) has three main subunits: a(1), b(2) and c(10-14). The alpha and beta chains form an alternating ring which encloses part of the gamma chain. F(1) is attached to F(0) by a central stalk formed by the gamma and epsilon chains, while a peripheral stalk is formed by the delta and b chains.

It localises to the cell inner membrane. In terms of biological role, f(1)F(0) ATP synthase produces ATP from ADP in the presence of a proton or sodium gradient. F-type ATPases consist of two structural domains, F(1) containing the extramembraneous catalytic core and F(0) containing the membrane proton channel, linked together by a central stalk and a peripheral stalk. During catalysis, ATP synthesis in the catalytic domain of F(1) is coupled via a rotary mechanism of the central stalk subunits to proton translocation. This protein is part of the stalk that links CF(0) to CF(1). It either transmits conformational changes from CF(0) to CF(1) or is implicated in proton conduction. The sequence is that of ATP synthase subunit delta from Nitrosococcus oceani (strain ATCC 19707 / BCRC 17464 / JCM 30415 / NCIMB 11848 / C-107).